The following is a 421-amino-acid chain: 5-methylthioadenosine/S-adenosylhomocysteine deaminase (421 aa).

2 residues coordinate Zn(2+): histidine 60 and histidine 62. Positions 89 and 181 each coordinate substrate. Histidine 208 serves as a coordination point for Zn(2+). 2 residues coordinate substrate: glutamate 211 and aspartate 296. A Zn(2+)-binding site is contributed by aspartate 296.

It belongs to the metallo-dependent hydrolases superfamily. MTA/SAH deaminase family. Zn(2+) is required as a cofactor.

It catalyses the reaction S-adenosyl-L-homocysteine + H2O + H(+) = S-inosyl-L-homocysteine + NH4(+). The catalysed reaction is S-methyl-5'-thioadenosine + H2O + H(+) = S-methyl-5'-thioinosine + NH4(+). In terms of biological role, catalyzes the deamination of 5-methylthioadenosine and S-adenosyl-L-homocysteine into 5-methylthioinosine and S-inosyl-L-homocysteine, respectively. Is also able to deaminate adenosine. In Pyrococcus horikoshii (strain ATCC 700860 / DSM 12428 / JCM 9974 / NBRC 100139 / OT-3), this protein is 5-methylthioadenosine/S-adenosylhomocysteine deaminase.